We begin with the raw amino-acid sequence, 355 residues long: Trans-3-hydroxy-L-proline dehydratase (355 aa).

Catalysis depends on C111, which acts as the Proton acceptor. Residues 112 to 113 (GH) and 276 to 277 (GS) each bind substrate.

This sequence belongs to the proline racemase family. In terms of assembly, homodimer.

It catalyses the reaction trans-3-hydroxy-L-proline = 1-pyrroline-2-carboxylate + H2O. In terms of biological role, catalyzes the dehydration of trans-3-hydroxy-L-proline (t3LHyp) to Delta(1)-pyrroline-2-carboxylate (Pyr2C). Together with LhpI, is involved in a metabolic pathway that converts t3LHyp to L-proline. The sequence is that of Trans-3-hydroxy-L-proline dehydratase from Colwellia psychrerythraea (strain 34H / ATCC BAA-681) (Vibrio psychroerythus).